A 90-amino-acid chain; its full sequence is Acylphosphatase (90 aa).

The Acylphosphatase-like domain maps to 5 to 90 (SFVVRVWGLV…PPKGSGFHTN (86 aa)). Catalysis depends on residues Arg20 and Asn38.

This sequence belongs to the acylphosphatase family.

The catalysed reaction is an acyl phosphate + H2O = a carboxylate + phosphate + H(+). This is Acylphosphatase (acyP) from Aeromonas hydrophila subsp. hydrophila (strain ATCC 7966 / DSM 30187 / BCRC 13018 / CCUG 14551 / JCM 1027 / KCTC 2358 / NCIMB 9240 / NCTC 8049).